We begin with the raw amino-acid sequence, 169 residues long: Major fimbrial subunit SMF-1 (169 aa).

The N-terminal stretch at 1 to 11 (MLAAAPLAANA) is a signal peptide.

This sequence belongs to the fimbrial protein family.

It is found in the fimbrium. In terms of biological role, involved in adherence to eukaryotic epithelial cells and abiotic surfaces. Mediates agglutination of animal red blood cells. In Stenotrophomonas maltophilia (strain K279a), this protein is Major fimbrial subunit SMF-1.